The primary structure comprises 416 residues: Serine protease inhibitor A3K (416 aa).

Positions 1–20 (MAFIAALGLLMAGICPAVLC) are cleaved as a signal peptide. N-linked (GlcNAc...) asparagine glycans are attached at residues Asn-102, Asn-182, Asn-220, and Asn-267. The tract at residues 365 to 392 (GTEGAAATAVTAALKSLPQTIPLLNFNR) is RCL.

It belongs to the serpin family. In terms of processing, N-glycosylated. As to expression, liver and plasma.

Its subcellular location is the secreted. Functionally, binds to and inhibits kallikreins. Inhibits trypsin but not chymotrypsin or elastase. The protein is Serine protease inhibitor A3K (Serpina3k) of Rattus norvegicus (Rat).